The following is a 186-amino-acid chain: Large ribosomal subunit protein uL5 (186 aa).

It belongs to the universal ribosomal protein uL5 family. Part of the 50S ribosomal subunit; part of the 5S rRNA/L5/L18/L25 subcomplex. Contacts the 5S rRNA and the P site tRNA. Forms a bridge to the 30S subunit in the 70S ribosome.

Its function is as follows. This is one of the proteins that bind and probably mediate the attachment of the 5S RNA into the large ribosomal subunit, where it forms part of the central protuberance. In the 70S ribosome it contacts protein S13 of the 30S subunit (bridge B1b), connecting the 2 subunits; this bridge is implicated in subunit movement. Contacts the P site tRNA; the 5S rRNA and some of its associated proteins might help stabilize positioning of ribosome-bound tRNAs. This Legionella pneumophila subsp. pneumophila (strain Philadelphia 1 / ATCC 33152 / DSM 7513) protein is Large ribosomal subunit protein uL5.